The chain runs to 203 residues: UPF0637 protein EF_3078 (203 aa).

The protein belongs to the UPF0637 family.

The polypeptide is UPF0637 protein EF_3078 (Enterococcus faecalis (strain ATCC 700802 / V583)).